The following is a 202-amino-acid chain: MSRYRGPRVKIIRRLGALPGLTNKTLKLKSGYINQSTSNKKVSQYRIRLEEKQKLRFHYGLTERQLLKYVRIARKAKGSTGQVLLQLLEMRLDNIIFRLGMAPTIPGARQLVNHRHILINNNTVDIPSYNCKPKDVITIKDRSKSQSIIIKNLNSFQKQKIPNHLTFDLMQIKGLVNQIIDREWIYLKINELLVVEYYSRQV.

The S4 RNA-binding domain occupies 90–154 (MRLDNIIFRL…SQSIIIKNLN (65 aa)).

Belongs to the universal ribosomal protein uS4 family. In terms of assembly, part of the 30S ribosomal subunit. Contacts protein S5. The interaction surface between S4 and S5 is involved in control of translational fidelity.

The protein localises to the plastid. It localises to the chloroplast. In terms of biological role, one of the primary rRNA binding proteins, it binds directly to 16S rRNA where it nucleates assembly of the body of the 30S subunit. With S5 and S12 plays an important role in translational accuracy. In Marchantia polymorpha (Common liverwort), this protein is Small ribosomal subunit protein uS4c (rps4).